The primary structure comprises 131 residues: Profilin-11 (131 aa).

C13 and C115 are disulfide-bonded. The Involved in PIP2 interaction motif lies at 81–97 (AVIRGKKGSGGITVKKT). T111 is modified (phosphothreonine).

The protein belongs to the profilin family. As to quaternary structure, occurs in many kinds of cells as a complex with monomeric actin in a 1:1 ratio. In terms of processing, phosphorylated by MAP kinases.

The protein resides in the cytoplasm. It is found in the cytoskeleton. In terms of biological role, binds to actin and affects the structure of the cytoskeleton. At high concentrations, profilin prevents the polymerization of actin, whereas it enhances it at low concentrations. This chain is Profilin-11, found in Zea mays (Maize).